The primary structure comprises 183 residues: Triggering receptor expressed on myeloid cells 3 (183 aa).

The first 19 residues, 1–19 (MSPLLLWLGLMLCVSGLQA), serve as a signal peptide directing secretion. Over 20 to 138 (GDEEEHKCFL…AWCQGKPVMV (119 aa)) the chain is Extracellular. Positions 30-128 (EGENLTLTCP…VIILRQRIRL (99 aa)) constitute an Ig-like V-type domain. A glycan (N-linked (GlcNAc...) asparagine) is linked at Asn33. A disulfide bond links Cys38 and Cys110. A helical transmembrane segment spans residues 139 to 159 (IVLTCGFILNKGLVFSVLFVF). Topologically, residues 160–183 (LCKAGPKVLQPSKTSKVQGVSEKQ) are cytoplasmic.

In terms of assembly, interacts with TYROBP/DAP12. Expressed in macrophages and in T-cells.

The protein resides in the cell membrane. Its function is as follows. Forms a receptor signaling complex with TYROBP/DAP12 which mediates activation of macrophages as part of the innate immune response. The protein is Triggering receptor expressed on myeloid cells 3 of Mus musculus (Mouse).